The primary structure comprises 513 residues: GMP synthase [glutamine-hydrolyzing] (513 aa).

In terms of domain architecture, Glutamine amidotransferase type-1 spans 8-198 (MILVLDFGSQ…VFGVCECVGE (191 aa)). C85 acts as the Nucleophile in catalysis. Active-site residues include H172 and E174. Residues 199 to 388 (WSMENFIEIE…LGIPDEIVWR (190 aa)) enclose the GMPS ATP-PPase domain. 226–232 (SGGVDSS) contributes to the ATP binding site.

Homodimer.

It carries out the reaction XMP + L-glutamine + ATP + H2O = GMP + L-glutamate + AMP + diphosphate + 2 H(+). Its pathway is purine metabolism; GMP biosynthesis; GMP from XMP (L-Gln route): step 1/1. Catalyzes the synthesis of GMP from XMP. This is GMP synthase [glutamine-hydrolyzing] from Bacillus licheniformis (strain ATCC 14580 / DSM 13 / JCM 2505 / CCUG 7422 / NBRC 12200 / NCIMB 9375 / NCTC 10341 / NRRL NRS-1264 / Gibson 46).